The chain runs to 169 residues: Allophycocyanin subunit beta-18 (169 aa).

The residue at position 72 (asparagine 72) is an N4-methylasparagine. Position 82 (cysteine 82) interacts with (2R,3E)-phycocyanobilin.

It belongs to the phycobiliprotein family. Heterodimer of ApcE and this beta chain. Contains one covalently linked bilin chromophore. The chromophore is added by phycocyanobilin lyase CpcS 1.

It is found in the cellular thylakoid membrane. A variant beta-allophycocyanin (AP) which forms a complex with ApcE, a phycobilisome terminal emitter that influences energy transfer to photosystem II. The polypeptide is Allophycocyanin subunit beta-18 (apcF) (Nostoc sp. (strain PCC 7120 / SAG 25.82 / UTEX 2576)).